The sequence spans 778 residues: Lon protease (778 aa).

The Lon N-terminal domain maps to 8–202 (LPLIPLRGLI…NVLTVIKDEL (195 aa)). Residue 354–361 (GPPGVGKT) coordinates ATP. The Lon proteolytic domain maps to 591 to 772 (EDKIGVVTGM…DTVLENALIG (182 aa)). Catalysis depends on residues Ser-678 and Lys-721.

Belongs to the peptidase S16 family. Homohexamer. Organized in a ring with a central cavity.

It localises to the cytoplasm. The catalysed reaction is Hydrolysis of proteins in presence of ATP.. In terms of biological role, ATP-dependent serine protease that mediates the selective degradation of mutant and abnormal proteins as well as certain short-lived regulatory proteins. Required for cellular homeostasis and for survival from DNA damage and developmental changes induced by stress. Degrades polypeptides processively to yield small peptide fragments that are 5 to 10 amino acids long. Binds to DNA in a double-stranded, site-specific manner. This Clostridium acetobutylicum (strain ATCC 824 / DSM 792 / JCM 1419 / IAM 19013 / LMG 5710 / NBRC 13948 / NRRL B-527 / VKM B-1787 / 2291 / W) protein is Lon protease.